The following is a 493-amino-acid chain: Alpha-amylase-related protein (493 aa).

Residues 1–19 form the signal peptide; it reads MFKLAFTLTLCLAGSLSLA. Residue Gln-20 is modified to Pyrrolidone carboxylic acid. Cys-47 and Cys-103 are joined by a disulfide. Asn-117, Gln-168, and Asp-177 together coordinate Ca(2+). An intrachain disulfide couples Cys-156 to Cys-170. A chloride-binding site is contributed by Arg-205. Asp-207 acts as the Nucleophile in catalysis. His-211 provides a ligand contact to Ca(2+). Glu-244 functions as the Proton donor in the catalytic mechanism. Residues Asn-307 and Arg-342 each contribute to the chloride site. 3 cysteine pairs are disulfide-bonded: Cys-375–Cys-381, Cys-417–Cys-440, and Cys-447–Cys-459.

The protein belongs to the glycosyl hydrolase 13 family. In terms of assembly, monomer. Requires Ca(2+) as cofactor. The cofactor is chloride.

The protein localises to the secreted. The enzyme catalyses Endohydrolysis of (1-&gt;4)-alpha-D-glucosidic linkages in polysaccharides containing three or more (1-&gt;4)-alpha-linked D-glucose units.. This chain is Alpha-amylase-related protein (Amyrel), found in Drosophila orena (Fruit fly).